The chain runs to 87 residues: HssA/B-like protein 58 (87 aa).

Residues 1 to 13 (MTILSAITSISRP) show a composition bias toward polar residues. The disordered stretch occupies residues 1-31 (MTILSAITSISRPNKSSKSVISSNGGSSLSM). The span at 14–31 (NKSSKSVISSNGGSSLSM) shows a compositional bias: low complexity.

This sequence belongs to the hssA/B family.

This Dictyostelium discoideum (Social amoeba) protein is HssA/B-like protein 58 (hssl58).